The following is a 468-amino-acid chain: Cysteine--tRNA ligase (468 aa).

Residue cysteine 33 participates in Zn(2+) binding. The short motif at 35–45 (ATVQGLPHIGH) is the 'HIGH' region element. The Zn(2+) site is built by cysteine 211, histidine 236, and glutamate 240. The short motif at 267–271 (KMSKS) is the 'KMSKS' region element. Lysine 270 serves as a coordination point for ATP.

The protein belongs to the class-I aminoacyl-tRNA synthetase family. As to quaternary structure, monomer. Requires Zn(2+) as cofactor.

It is found in the cytoplasm. The enzyme catalyses tRNA(Cys) + L-cysteine + ATP = L-cysteinyl-tRNA(Cys) + AMP + diphosphate. This is Cysteine--tRNA ligase from Mycolicibacterium paratuberculosis (strain ATCC BAA-968 / K-10) (Mycobacterium paratuberculosis).